Here is a 407-residue protein sequence, read N- to C-terminus: Phosphopentomutase (407 aa).

Mn(2+)-binding residues include Asp-10, Asp-306, His-311, Asp-347, His-348, and His-359.

This sequence belongs to the phosphopentomutase family. Requires Mn(2+) as cofactor.

It is found in the cytoplasm. It carries out the reaction 2-deoxy-alpha-D-ribose 1-phosphate = 2-deoxy-D-ribose 5-phosphate. The enzyme catalyses alpha-D-ribose 1-phosphate = D-ribose 5-phosphate. It functions in the pathway carbohydrate degradation; 2-deoxy-D-ribose 1-phosphate degradation; D-glyceraldehyde 3-phosphate and acetaldehyde from 2-deoxy-alpha-D-ribose 1-phosphate: step 1/2. Its function is as follows. Isomerase that catalyzes the conversion of deoxy-ribose 1-phosphate (dRib-1-P) and ribose 1-phosphate (Rib-1-P) to deoxy-ribose 5-phosphate (dRib-5-P) and ribose 5-phosphate (Rib-5-P), respectively. The protein is Phosphopentomutase of Salmonella paratyphi A (strain AKU_12601).